The sequence spans 369 residues: Lipoyl synthase, mitochondrial (369 aa).

Residues 1-32 constitute a mitochondrion transit peptide; the sequence is MLTKGVRALAWSPRRYITLDAEAAKPVVAKRR. [4Fe-4S] cluster contacts are provided by Cys-106, Cys-111, Cys-117, Cys-136, Cys-140, Cys-143, and Ser-351. The Radical SAM core domain maps to 121–340; the sequence is NKGSATATIM…KEKALELGFL (220 aa).

Belongs to the radical SAM superfamily. Lipoyl synthase family. The cofactor is [4Fe-4S] cluster.

Its subcellular location is the mitochondrion. The catalysed reaction is [[Fe-S] cluster scaffold protein carrying a second [4Fe-4S](2+) cluster] + N(6)-octanoyl-L-lysyl-[protein] + 2 oxidized [2Fe-2S]-[ferredoxin] + 2 S-adenosyl-L-methionine + 4 H(+) = [[Fe-S] cluster scaffold protein] + N(6)-[(R)-dihydrolipoyl]-L-lysyl-[protein] + 4 Fe(3+) + 2 hydrogen sulfide + 2 5'-deoxyadenosine + 2 L-methionine + 2 reduced [2Fe-2S]-[ferredoxin]. The protein operates within protein modification; protein lipoylation via endogenous pathway; protein N(6)-(lipoyl)lysine from octanoyl-[acyl-carrier-protein]: step 2/2. Functionally, catalyzes the radical-mediated insertion of two sulfur atoms into the C-6 and C-8 positions of the octanoyl moiety bound to the lipoyl domains of lipoate-dependent enzymes, thereby converting the octanoylated domains into lipoylated derivatives. The polypeptide is Lipoyl synthase, mitochondrial (Eremothecium gossypii (strain ATCC 10895 / CBS 109.51 / FGSC 9923 / NRRL Y-1056) (Yeast)).